The primary structure comprises 348 residues: Short-chain dehydrogenase fogG (348 aa).

Residues L51, R75, D100, and N126 each contribute to the NADP(+) site. Residues S180 and Y215 each act as proton donor in the active site. 2 residues coordinate NADP(+): Y215 and K219. The active-site Lowers pKa of active site Tyr is K219.

It belongs to the short-chain dehydrogenases/reductases (SDR) family.

It functions in the pathway secondary metabolite biosynthesis. Functionally, short-chain dehydrogenase; part of the gene cluster that mediates the biosynthesis of flavoglaucin and congeners (including aspergin, dihydroauroglaucin and auroglaucin), prenylated salicylaldehyde derivatives carrying a saturated or an unsaturated C-7 side chain. The PKS fogA releases the carboxylic acid (8E,10E,12E)-3,5,7-trihydroxytetradeca-8,10,12-trienoic acid as its product, as well as derivatives with one and two double bonds. FogA is indeed able to reduce the initial triketide, thus being at least partially responsible for the differently saturated heptyl side chains of flavoglaucin congeners. The oxidoreductases fogB, fogC and fogD modify the nascent polyketide in fogA-bound form and, together, fogA, fogB, fogC and fogD are necessary for the formation of the aromatic core and the cyclized PKS products are released as salicyl alcohols. In particular, fogB is responsible for oxidation of a hydroxyl group or reduction of remaining double bond(s) at the C-7 residue whereas fogD is probably involved in the reductive release of the modified PKS products. The cytochrome P450 monooxygenase fogE is then responsible for the hydroxylation at C-3 of the benzene ring. The fogE products are substrates of the prenyltransferase fogH and the prenylated benzyl alcohols are subsequently oxidized by the fogF to produce the final aryl aldehydes flavoglaucin and congeners. The short-chain dehydrogenase fogG does not seem to be involved in the biosynthesis of the prenylated salicylaldehyde derivatives. This is Short-chain dehydrogenase fogG from Aspergillus ruber (strain CBS 135680).